A 425-amino-acid polypeptide reads, in one-letter code: tRNA(Met) cytidine acetate ligase (425 aa).

Residues isoleucine 7–histidine 20, glycine 102, asparagine 165, and arginine 190–isoleucine 191 contribute to the ATP site.

It belongs to the TmcAL family.

The protein localises to the cytoplasm. It catalyses the reaction cytidine(34) in elongator tRNA(Met) + acetate + ATP = N(4)-acetylcytidine(34) in elongator tRNA(Met) + AMP + diphosphate. Its function is as follows. Catalyzes the formation of N(4)-acetylcytidine (ac(4)C) at the wobble position of elongator tRNA(Met), using acetate and ATP as substrates. First activates an acetate ion to form acetyladenylate (Ac-AMP) and then transfers the acetyl group to tRNA to form ac(4)C34. The sequence is that of tRNA(Met) cytidine acetate ligase from Thermosipho melanesiensis (strain DSM 12029 / CIP 104789 / BI429).